We begin with the raw amino-acid sequence, 640 residues long: Glycosyltransferase-like protein gnt14 (640 aa).

Residues 1 to 14 (MFGFKTTKNKKRVR) are Cytoplasmic-facing. Residues 15–35 (LLVVAIGVMIFFMCLSNFSSI) traverse the membrane as a helical; Signal-anchor for type II membrane protein segment. Residues 36–640 (QSRQSSSTDT…TENCYSNDHW (605 aa)) are Extracellular-facing. 2 disordered regions span residues 63–184 (PSIN…PLSS) and 254–277 (NSNN…NNNY). The span at 65 to 171 (ININNSENNI…NININNNNKP (107 aa)) shows a compositional bias: low complexity. A glycan (N-linked (GlcNAc...) asparagine) is linked at Asn-68. N-linked (GlcNAc...) asparagine glycans are attached at residues Asn-410 and Asn-539.

This sequence belongs to the glycosyltransferase 8 family. Highly divergent.

The protein localises to the membrane. This chain is Glycosyltransferase-like protein gnt14 (gnt14), found in Dictyostelium discoideum (Social amoeba).